The primary structure comprises 341 residues: Putative [LysW]-lysine/[LysW]-ornithine hydrolase (341 aa).

His-62 is a binding site for Zn(2+). Residue Asp-64 is part of the active site. Residue Asp-86 participates in Zn(2+) binding. Catalysis depends on Glu-115, which acts as the Proton acceptor. Residues Glu-116, Glu-140, and His-309 each contribute to the Zn(2+) site.

Belongs to the peptidase M20A family. LysK subfamily. The cofactor is Zn(2+). Requires Co(2+) as cofactor.

The protein localises to the cytoplasm. It catalyses the reaction [amino-group carrier protein]-C-terminal-gamma-(L-lysyl)-L-glutamate + H2O = [amino-group carrier protein]-C-terminal-L-glutamate + L-lysine. The catalysed reaction is [amino-group carrier protein]-C-terminal-gamma-(L-ornithyl)-L-glutamate + H2O = [amino-group carrier protein]-C-terminal-L-glutamate + L-ornithine. It participates in amino-acid biosynthesis; L-lysine biosynthesis via AAA pathway; L-lysine from L-alpha-aminoadipate (Thermus route): step 5/5. The protein operates within amino-acid biosynthesis; L-arginine biosynthesis. Functionally, catalyzes the release of L-lysine from [LysW]-gamma-L-lysine and the release of L-ornithine from [LysW]-L-ornithine. This chain is Putative [LysW]-lysine/[LysW]-ornithine hydrolase, found in Pyrobaculum aerophilum (strain ATCC 51768 / DSM 7523 / JCM 9630 / CIP 104966 / NBRC 100827 / IM2).